The chain runs to 152 residues: Bacchus (152 aa).

A compositionally biased stretch (basic and acidic residues) spans Asp29–Ala41. The segment at Asp29–Ala152 is disordered. Residues Ala42–Asp51 are compositionally biased toward low complexity. Basic and acidic residues predominate over residues Glu72–Lys89. A compositionally biased stretch (acidic residues) spans Gly99–Ala152.

As to expression, expressed in the brain.

It localises to the nucleus. Functionally, negatively regulates tyramine beta-hydroxylase tbh and thus the conversion of tyramine (TA) to octopamine (OA). In tyrosine decarboxylase 2 (Tdc2) neurons, acts in an amine-mediated signaling pathway to negatively regulate acute ethanol sensitivity probably via tbh-mediated depletion of TA. The chain is Bacchus from Drosophila melanogaster (Fruit fly).